The chain runs to 347 residues: Ferrochelatase (347 aa).

Fe cation-binding residues include histidine 193 and glutamate 273.

It belongs to the ferrochelatase family.

The protein localises to the cytoplasm. The catalysed reaction is heme b + 2 H(+) = protoporphyrin IX + Fe(2+). The protein operates within porphyrin-containing compound metabolism; protoheme biosynthesis; protoheme from protoporphyrin-IX: step 1/1. In terms of biological role, catalyzes the ferrous insertion into protoporphyrin IX. The protein is Ferrochelatase of Rickettsia canadensis (strain McKiel).